We begin with the raw amino-acid sequence, 341 residues long: 3-dehydroquinate synthase (341 aa).

NAD(+) contacts are provided by residues 54 to 59 (DGEKYK), 88 to 92 (GVVTD), 112 to 113 (TT), Lys-125, Lys-133, and 151 to 154 (TLST). The Zn(2+) site is built by Glu-166, His-220, and His-236.

The protein belongs to the sugar phosphate cyclases superfamily. Dehydroquinate synthase family. It depends on NAD(+) as a cofactor. Co(2+) serves as cofactor. Zn(2+) is required as a cofactor.

The protein resides in the cytoplasm. It catalyses the reaction 7-phospho-2-dehydro-3-deoxy-D-arabino-heptonate = 3-dehydroquinate + phosphate. Its pathway is metabolic intermediate biosynthesis; chorismate biosynthesis; chorismate from D-erythrose 4-phosphate and phosphoenolpyruvate: step 2/7. Functionally, catalyzes the conversion of 3-deoxy-D-arabino-heptulosonate 7-phosphate (DAHP) to dehydroquinate (DHQ). This Thermococcus kodakarensis (strain ATCC BAA-918 / JCM 12380 / KOD1) (Pyrococcus kodakaraensis (strain KOD1)) protein is 3-dehydroquinate synthase.